We begin with the raw amino-acid sequence, 452 residues long: Trigger factor (452 aa).

Positions 171–256 constitute a PPIase FKBP-type domain; the sequence is GDRVTLAFKG…ATLIEAPQDA (86 aa).

This sequence belongs to the FKBP-type PPIase family. Tig subfamily.

It localises to the cytoplasm. It carries out the reaction [protein]-peptidylproline (omega=180) = [protein]-peptidylproline (omega=0). Involved in protein export. Acts as a chaperone by maintaining the newly synthesized protein in an open conformation. Functions as a peptidyl-prolyl cis-trans isomerase. The protein is Trigger factor of Afipia carboxidovorans (strain ATCC 49405 / DSM 1227 / KCTC 32145 / OM5) (Oligotropha carboxidovorans).